A 576-amino-acid chain; its full sequence is Arginine--tRNA ligase (576 aa).

The 'HIGH' region signature appears at 122–132; it reads PNVAKEMHVGH.

The protein belongs to the class-I aminoacyl-tRNA synthetase family. In terms of assembly, monomer.

Its subcellular location is the cytoplasm. It catalyses the reaction tRNA(Arg) + L-arginine + ATP = L-arginyl-tRNA(Arg) + AMP + diphosphate. The polypeptide is Arginine--tRNA ligase (Erwinia tasmaniensis (strain DSM 17950 / CFBP 7177 / CIP 109463 / NCPPB 4357 / Et1/99)).